Here is a 512-residue protein sequence, read N- to C-terminus: Ferredoxin--nitrite reductase (512 aa).

Residues Cys396, Cys402, Cys437, and Cys441 each contribute to the [4Fe-4S] cluster site. Siroheme is bound at residue Cys441.

This sequence belongs to the nitrite and sulfite reductase 4Fe-4S domain family.

It carries out the reaction 6 oxidized [2Fe-2S]-[ferredoxin] + NH4(+) + 2 H2O = nitrite + 6 reduced [2Fe-2S]-[ferredoxin] + 8 H(+). The protein is Ferredoxin--nitrite reductase (nirA) of Synechococcus elongatus (strain ATCC 33912 / PCC 7942 / FACHB-805) (Anacystis nidulans R2).